The chain runs to 342 residues: Galactose mutarotase (342 aa).

S14 carries the phosphoserine modification. Beta-D-galactose contacts are provided by residues 81–82 and H107; that span reads NR. A Phosphoserine modification is found at S124. Residue H176 is the Proton donor of the active site. Residues 176-178, D243, Q279, and E307 each bind beta-D-galactose; that span reads HSY. The Proton acceptor role is filled by E307.

It belongs to the aldose epimerase family. As to quaternary structure, monomer.

It localises to the cytoplasm. It carries out the reaction alpha-D-galactose = beta-D-galactose. The enzyme catalyses alpha-D-glucose = beta-D-glucose. The protein operates within carbohydrate metabolism; hexose metabolism. Its pathway is carbohydrate metabolism; galactose metabolism. Functionally, mutarotase that catalyzes the interconversion of beta-D-galactose and alpha-D-galactose during galactose metabolism. Beta-D-galactose is metabolized in the liver into glucose 1-phosphate, the primary metabolic fuel, by the action of four enzymes that constitute the Leloir pathway: GALM, GALK1 (galactokinase), GALT (galactose-1-phosphate uridylyltransferase) and GALE (UDP-galactose-4'-epimerase). Involved in the maintenance of the equilibrium between the beta- and alpha-anomers of galactose, therefore ensuring a sufficient supply of the alpha-anomer for GALK1. Also active on D-glucose although shows a preference for galactose over glucose. The chain is Galactose mutarotase (GALM) from Sus scrofa (Pig).